The chain runs to 329 residues: Homeobox protein Nkx-3.2 (329 aa).

Residues 107–188 are disordered; it reads GLGSPCGGAP…PDPSPPDEDP (82 aa). Positions 110 to 124 are enriched in gly residues; that stretch reads SPCGGAPGAGAGGEP. Over residues 138 to 160 the composition is skewed to basic and acidic residues; that stretch reads ELGRPGDIGERKKQRPLEARAKG. Residues 202–261 constitute a DNA-binding region (homeobox); the sequence is KKRSRAAFSHAQVFELERRFNHQRYLSGPERADLAASLKLTETQVKIWFQNRRYKTKRRQ.

The protein belongs to the NK-3 homeobox family. As to expression, first expressed in developing facial cartilage in early tailbud embryos, with expression localized to the basihyobranchial, palatoquadrate and possibly Meckel's cartilages. Shortly after, a second area of expression is seen in the musculature of the anterior gut. During late embryogenesis, gut expression extends into hindgut tissues. In adults, expressed at a high level in the kidney, pancreas, spleen and stomach and at a slightly lower level in the intestine, skeletal muscle and tongue. Adult heart, liver and lung show little or no expression.

The protein localises to the nucleus. The sequence is that of Homeobox protein Nkx-3.2 (nkx3-2) from Xenopus laevis (African clawed frog).